Reading from the N-terminus, the 2169-residue chain is Voltage-dependent L-type calcium channel subunit alpha-1C (2169 aa).

Topologically, residues 1 to 154 (MIRAFAQPST…RACISIVEWK (154 aa)) are cytoplasmic. The segment at 77-98 (GAALSWLAAIDAARQAKLMGSA) is calmodulin-binding. Residues 104 to 128 (STVSSTQRKRQQYGKPKKQGGTTAT) form a disordered region. The span at 110-121 (QRKRQQYGKPKK) shows a compositional bias: basic residues. The I repeat unit spans residues 141 to 438 (NPIRRACISI…LVLGVLSGEF (298 aa)). The helical transmembrane segment at 155-173 (PFEIIILLTIFANCVALAI) threads the bilayer. At 174-188 (YIPFPEDDSNATNSN) the chain is on the extracellular side. Asn183 carries an N-linked (GlcNAc...) asparagine glycan. The chain crosses the membrane as a helical span at residues 189 to 209 (LERVEYLFLIIFTVEAFLKVI). At 210–218 (AYGLLFHPN) the chain is on the cytoplasmic side. The chain crosses the membrane as a helical span at residues 219-239 (AYLRNGWNLLDFIIVVVGLFS). Residues 240 to 262 (AILEQATKADGANALGGKGAGFD) lie on the Extracellular side of the membrane. Residues 263–281 (VKALRAFRVLRPLRLVSGV) form a helical membrane-spanning segment. Topologically, residues 282-298 (PSLQVVLNSIIKAMVPL) are cytoplasmic. Residues 299–320 (LHIALLVLFVIIIYAIIGLELF) traverse the membrane as a helical segment. At 321–380 (MGKMHKTCYNQEGIIDVPAEEDPSPCALETGHGRQCQNGTVCKPGWDGPKHGITNFDNFA) the chain is on the extracellular side. 2 disulfides stabilise this stretch: Cys328–Cys356 and Cys346–Cys362. The N-linked (GlcNAc...) asparagine glycan is linked to Asn358. Positions 381 to 402 (FAMLTVFQCITMEGWTDVLYWM) form an intramembrane region, pore-forming. Positions 391-394 (TMEG) match the Selectivity filter of repeat I motif. A Ca(2+)-binding site is contributed by Glu393. At 403 to 410 (QDAMGYEL) the chain is on the extracellular side. The helical transmembrane segment at 411 to 431 (PWVYFVSLVIFGSFFVLNLVL) threads the bilayer. The Cytoplasmic segment spans residues 432–554 (GVLSGEFSKE…RKCRAAVKSN (123 aa)). Residues 458–475 (QQLEEDLKGYLDWITQAE) form an AID/alpha-interaction domain; mediates interaction with the beta subunit region. Residues 479 to 511 (PENEDEGMDEDKPRNMSMPTSETESVNTENVAG) are disordered. Polar residues predominate over residues 495-508 (SMPTSETESVNTEN). The residue at position 499 (Ser499) is a Phosphoserine. Thr506 carries the phosphothreonine modification. Residues 540 to 786 (NRFCRRKCRA…LFLAIAVDNL (247 aa)) form an II repeat. Residues 555–573 (VFYWLVIFLVFLNTLTIAS) traverse the membrane as a helical segment. The Extracellular segment spans residues 574–584 (EHYNQPHWLTE). The chain crosses the membrane as a helical span at residues 585 to 605 (VQDTANKALLALFTAEMLLKM). Residues 606-616 (YSLGLQAYFVS) are Cytoplasmic-facing. The helical transmembrane segment at 617 to 636 (LFNRFDCFIVCGGILETILV) threads the bilayer. Topologically, residues 637-645 (ETKIMSPLG) are extracellular. The helical transmembrane segment at 646–664 (ISCWRCVRLLRIFKITRYW) threads the bilayer. At 665 to 683 (NSLSNLVASLLNSLRSIAS) the chain is on the cytoplasmic side. A helical transmembrane segment spans residues 684–703 (LLLLLFLFIIIFSLLGMQLF). Residues 704–723 (GGKFNFDEMQTRRSTFDNFP) lie on the Extracellular side of the membrane. Residues 724 to 745 (QSLLTVFQILTGEDWNSVMYDG) constitute an intramembrane region (pore-forming). A Selectivity filter of repeat II motif is present at residues 734–737 (TGED). Ca(2+) is bound at residue Glu736. Residues 746-755 (IMAYGGPSFP) lie on the Extracellular side of the membrane. Residues 756 to 775 (GMLVCIYFIILFISPNYILL) form a helical membrane-spanning segment. Over 776–930 (NLFLAIAVDN…LQCHRIVNDT (155 aa)) the chain is Cytoplasmic. The segment at 794–891 (SAQKEEEEEK…EMPVGPRPRP (98 aa)) is disordered. The segment covering 813 to 836 (SPEKKQEVMEKPAVEESKEEKIEL) has biased composition (basic and acidic residues). Ser838 and Ser845 each carry phosphoserine. Positions 859-906 (SENEDKSPHSNPDTAGEEDEEEPEMPVGPRPRPLSELHLKEKAVPMPE) are interaction with STAC2. Residues 873–882 (AGEEDEEEPE) show a composition bias toward acidic residues. The stretch at 917–1198 (NRFRLQCHRI…IFVGFVIVTF (282 aa)) is one III repeat. The helical transmembrane segment at 931 to 949 (IFTNLILFFILLSSISLAA) threads the bilayer. The Extracellular portion of the chain corresponds to 950 to 961 (EDPVQHTSFRNH). A helical transmembrane segment spans residues 962-981 (ILFYFDIVFTTIFTIEIALK). The Cytoplasmic portion of the chain corresponds to 982-997 (MTAYGAFLHKGSFCRN). The helical transmembrane segment at 998-1016 (YFNILDLLVVSVSLISFGI) threads the bilayer. Topologically, residues 1017–1023 (QSSAINV) are extracellular. Residues 1024 to 1041 (VKILRVLRVLRPLRINRA) traverse the membrane as a helical segment. At 1042–1060 (KGLKHVVQCVFVAIRTIGN) the chain is on the cytoplasmic side. The chain crosses the membrane as a helical span at residues 1061-1080 (IVIVTTLLQFMFACIGVQLF). Over 1081–1130 (KGKLYTCSDSSKQTEAESKGNYITYKTGEVDHPIIQPRSWENSKFDFDNV) the chain is Extracellular. Residues 1118-1207 (RSWENSKFDF…FQEQGEQEYK (90 aa)) are dihydropyridine binding. The pore-forming intramembrane region spans 1131-1151 (LAAMMALFTVSTFEGWPELLY). The Selectivity filter of repeat III motif lies at 1142–1145 (TFEG). Glu1144 contributes to the Ca(2+) binding site. Residues 1152 to 1168 (RSIDSHTEDKGPIYNYR) lie on the Extracellular side of the membrane. The helical transmembrane segment at 1169–1190 (VEISIFFIIYIIIIAFFMMNIF) threads the bilayer. The Cytoplasmic segment spans residues 1191 to 1248 (VGFVIVTFQEQGEQEYKNCELDKNQRQCVEYALKARPLPRYIPKNQHQYKVWYVVNST). Residues 1235 to 1508 (NQHQYKVWYV…LFVAVIMDNF (274 aa)) form an IV repeat. A helical transmembrane segment spans residues 1249–1270 (YFEYLMFVLILLNTICLAMQHY). Topologically, residues 1271–1278 (GQSCLFKI) are extracellular. The chain crosses the membrane as a helical span at residues 1279–1300 (AMNILNMLFTGLFTVEMILKLI). The Cytoplasmic segment spans residues 1301–1310 (AFKPKHYFCD). A helical transmembrane segment spans residues 1311-1330 (AWNTFDALIVVGSIVDIAIT). Residues 1331-1353 (EVHPAEHTQCSPSMSAEENSRIS) lie on the Extracellular side of the membrane. Residues 1354 to 1372 (ITFFRLFRVMRLVKLLSRG) traverse the membrane as a helical segment. At 1373 to 1390 (EGIRTLLWTFIKSFQALP) the chain is on the cytoplasmic side. Residues 1391 to 1411 (YVALLIVMLFFIYAVIGMQVF) form a helical membrane-spanning segment. Topologically, residues 1412 to 1433 (GKIALNDTTEINRNNNFQTFPQ) are extracellular. The N-linked (GlcNAc...) asparagine glycan is linked to Asn1417. Residues 1434 to 1452 (AVLLLFRCATGEAWQDIML) constitute an intramembrane region (pore-forming). A Selectivity filter of repeat IV motif is present at residues 1443-1446 (TGEA). Residues 1453-1480 (ACMPGKKCAPESEPSNSTEGETPCGSSF) lie on the Extracellular side of the membrane. Residues 1459-1527 (KCAPESEPSN…LGPHHLDEFK (69 aa)) are dihydropyridine binding. Cys1460 and Cys1476 are joined by a disulfide. Asn1468 carries an N-linked (GlcNAc...) asparagine glycan. Positions 1473-1515 (ETPCGSSFAVFYFISFYMLCAFLIINLFVAVIMDNFDYLTRDW) are phenylalkylamine binding. A helical transmembrane segment spans residues 1481–1505 (AVFYFISFYMLCAFLIINLFVAVIM). Topologically, residues 1506 to 2169 (DNFDYLTRDW…PDSRSYVSNL (664 aa)) are cytoplasmic. The tract at residues 1640-1667 (DEVTVGKFYATFLIQEYFRKFKKRKEQG) is important for interaction with STAC1, STAC2 and STAC3. Positions 1640-1673 (DEVTVGKFYATFLIQEYFRKFKKRKEQGLVGKPS) are calmodulin-binding. The tract at residues 1646-1666 (KFYATFLIQEYFRKFKKRKEQ) is calmodulin-binding IQ region. The important for localization in at the junctional membrane stretch occupies residues 1680–1699 (LQAGLRTLHDIGPEIRRAIS). 2 positions are modified to phosphoserine: Ser1699 and Ser1720. 2 stretches are compositionally biased toward polar residues: residues 1761–1770 (KTGNNQADTE) and 1780–1792 (STFT…STGS). The interval 1761-1793 (KTGNNQADTESPSHEKLVDSTFTPSSYSSTGSN) is disordered. The residue at position 1927 (Ser1927) is a Phosphoserine; by PKA. A disordered region spans residues 1970 to 1998 (RSHSPSTFPRPRPTPPVTPGSRGRPLQPI). Residues 1977 to 1987 (FPRPRPTPPVT) are compositionally biased toward pro residues.

The protein belongs to the calcium channel alpha-1 subunit (TC 1.A.1.11) family. CACNA1C subfamily. In terms of assembly, component of a calcium channel complex consisting of a pore-forming alpha subunit (CACNA1C) and ancillary beta, gamma and delta subunits. The channel complex contains alpha, beta, gamma and delta subunits in a 1:1:1:1 ratio, i.e. it contains only one of each type of subunit. CACNA1C channel activity is modulated by ancillary subunits, such as CACNB1, CACNB2, CACNB3, CACNA2D1 and CACNA2D4. Interacts with the gamma subunits CACNG4, CACNG6, CACNG7 and CACNG8. Interacts with CACNB1. Interacts with CACNB2. Identified in a complex with CACNA2D4 and CACNB3. Interacts with CACNB3. Interacts with CACNA2D1. Interacts with CACNA2D4. Interacts with CALM1. Interacts (via the N-terminus and the C-terminal C and IQ motifs) with CABP1; this inhibits Ca(2+)-dependent channel inactivation. The binding via the C motif is calcium independent whereas the binding via IQ requires the presence of calcium and is mutually exclusive with calmodulin binding. The binding to the cytoplasmic N-terminal domain is calcium independent but is essential for the channel modulation. Interacts (via C-terminal CDB motif) with CABP5; in a calcium-dependent manner. Interacts with CIB1; the interaction increases upon cardiomyocytes hypertrophy. Interacts with STAC2 and STAC3; this inhibits channel inactivation. In terms of processing, phosphorylation by PKA at Ser-1927 activates the channel. Elevated levels of blood glucose lead to increased phosphorylation by PKA. Is also phosphorylated in vitro by CaM-kinase II, PKC and CGPK. As to expression, detected in hippocampus and brain cortex, on neuronal cell bodies and dendrites, and in post-synaptic density in brain (at protein level). Isoforms 4 and 5 are expressed throughout the central nervous system, with highest levels in the olfactory bulb and cerebellum. Also expressed in heart, pituitary, adrenal gland, liver, kidney, and in a much lesser extent in testes and spleen.

The protein resides in the cell membrane. It localises to the sarcolemma. Its subcellular location is the perikaryon. It is found in the postsynaptic density membrane. The protein localises to the cell projection. The protein resides in the dendrite. It localises to the T-tubule. It carries out the reaction Ca(2+)(in) = Ca(2+)(out). With respect to regulation, inhibited by dihydropyridines (DHP), such as isradipine. Inhibited by nifedipine. Channel activity is regulated by Ca(2+) and calmodulin. Binding of STAC1, STAC2 or STAC3 to a region that overlaps with the calmodulin binding site inhibits channel inactivation by Ca(2+) and calmodulin. Binding of calmodulin or CABP1 at the same regulatory sites results in opposite effects on the channel function. Shear stress and pressure increases calcium channel activity. Functionally, pore-forming, alpha-1C subunit of the voltage-gated calcium channel that gives rise to L-type calcium currents. Mediates influx of calcium ions into the cytoplasm, and thereby triggers calcium release from the sarcoplasm. Plays an important role in excitation-contraction coupling in the heart. Required for normal heart development and normal regulation of heart rhythm. Required for normal contraction of smooth muscle cells in blood vessels and in the intestine. Essential for normal blood pressure regulation via its role in the contraction of arterial smooth muscle cells. Long-lasting (L-type) calcium channels belong to the 'high-voltage activated' (HVA) group. The chain is Voltage-dependent L-type calcium channel subunit alpha-1C (Cacna1c) from Rattus norvegicus (Rat).